We begin with the raw amino-acid sequence, 284 residues long: MTAKLIDGKAIAASLRQQIAKRVAERSQQGLRTPGLAVILVGSDPASQVYVSHKRKDCEEVGFISQAYDLPAETTQVALTNLIDRLNEDAAVDGILLQLPLPAHLDASLLLERIRPDKDVDGFHPYNVGRLAQRIPLLRPCTPKGIIALLESTGVDLYGLDAVVVGASNIVGRPMAMELLLAGCTVTVTHRFTKDLAGHVSRADLVVVAAGKPGLVKGEWIKPGAIVIDVGINRQDDGKLVGDVVYETALPRAGWITPVPGGVGPMTRACLLENTLYAAETLHD.

NADP(+) is bound by residues 166–168 (GAS) and isoleucine 232.

Belongs to the tetrahydrofolate dehydrogenase/cyclohydrolase family. Homodimer.

The enzyme catalyses (6R)-5,10-methylene-5,6,7,8-tetrahydrofolate + NADP(+) = (6R)-5,10-methenyltetrahydrofolate + NADPH. It carries out the reaction (6R)-5,10-methenyltetrahydrofolate + H2O = (6R)-10-formyltetrahydrofolate + H(+). Its pathway is one-carbon metabolism; tetrahydrofolate interconversion. Its function is as follows. Catalyzes the oxidation of 5,10-methylenetetrahydrofolate to 5,10-methenyltetrahydrofolate and then the hydrolysis of 5,10-methenyltetrahydrofolate to 10-formyltetrahydrofolate. This chain is Bifunctional protein FolD 1, found in Pseudomonas syringae pv. tomato (strain ATCC BAA-871 / DC3000).